Here is a 473-residue protein sequence, read N- to C-terminus: MVKDFSFFIYDYESFGVNPATDRPAQFAGIRTDADFNIIGEPIMFYCKQTNDYLPAPEAVMVTGITPQECNEKGLSEPEFAANILAEFSQPNTCVMGYNNIRYDDEMTRYTFYRNFIEPYEYSWKNGNSRWDLLDLVRACYALRPEGINWAYDDDGMPSFRLEKLTKANSIEHENAHDAMADVYATIAMAKLIKEKQPKLFQYFFENRGKKEIEKLVDTGAMTPLVHVSGMLGNYRGNCTWVAPLAWHPTNQNALIVCDLTGDIDNLLAKSADELRADLYTKKLELEERGVSSVPLKLVHINKCPILAPAKTLLPETANRLGIDRQLCLDNLAKLRASFDIREKVADIFNEERQFASNDNVETELYNGFFSNADKNNMAILRSLPAEKLSEHGLAFEDKRILELLFHYRARHFYKTLTRAEQIKWKKYRQNKLEKSAVEFEASLQRLVEXHSDNSEKLSLLQQVYEYGIKLLG.

The 180-residue stretch at 9-188 folds into the Exonuclease domain; the sequence is IYDYESFGVN…AMADVYATIA (180 aa). Mg(2+) contacts are provided by Asp-11, Glu-13, and Asp-182. A substrate-binding site is contributed by Glu-13. Positions 198 to 353 constitute an ExoI SH3-like domain; that stretch reads PKLFQYFFEN…KVADIFNEER (156 aa). Residues 356–472 form the ExoI C-terminal domain; the sequence is ASNDNVETEL…QVYEYGIKLL (117 aa).

In terms of assembly, monomer. Interacts with ssb (via C-terminus); this interaction stimulates the exonuclease activity by recruiting the enzyme to its substrate. The cofactor is Mg(2+).

The catalysed reaction is Exonucleolytic cleavage in the 3'- to 5'-direction to yield nucleoside 5'-phosphates.. In terms of biological role, degrades single-stranded DNA (ssDNA) in a highly processive manner. Also functions as a DNA deoxyribophosphodiesterase that releases deoxyribose-phosphate moieties following the cleavage of DNA at an apurinic/apyrimidinic (AP) site by either an AP endonuclease or AP lyase. Involved in genome maintenance but probably not in phase variation, which contributes to the virulence and disease. This is Exodeoxyribonuclease I (sbcB) from Haemophilus influenzae (strain ATCC 51907 / DSM 11121 / KW20 / Rd).